A 178-amino-acid polypeptide reads, in one-letter code: Large ribosomal subunit protein uL5 (178 aa).

This sequence belongs to the universal ribosomal protein uL5 family. As to quaternary structure, part of the 50S ribosomal subunit; part of the 5S rRNA/L5/L18/L25 subcomplex. Contacts the 5S rRNA and the P site tRNA. Forms a bridge to the 30S subunit in the 70S ribosome.

Functionally, this is one of the proteins that bind and probably mediate the attachment of the 5S RNA into the large ribosomal subunit, where it forms part of the central protuberance. In the 70S ribosome it contacts protein S13 of the 30S subunit (bridge B1b), connecting the 2 subunits; this bridge is implicated in subunit movement. Contacts the P site tRNA; the 5S rRNA and some of its associated proteins might help stabilize positioning of ribosome-bound tRNAs. In Acinetobacter baylyi (strain ATCC 33305 / BD413 / ADP1), this protein is Large ribosomal subunit protein uL5.